We begin with the raw amino-acid sequence, 425 residues long: UPF0229 protein SG1344 (425 aa).

The disordered stretch occupies residues 49-109 (GESVSIPNTD…GQGSVSQDGE (61 aa)). Polar residues predominate over residues 50–59 (ESVSIPNTDI). Basic and acidic residues predominate over residues 77–90 (PGNDHFVQNDRIER).

Belongs to the UPF0229 family.

The protein is UPF0229 protein SG1344 of Sodalis glossinidius (strain morsitans).